The chain runs to 455 residues: UDP-N-acetylmuramoylalanine--D-glutamate ligase (455 aa).

ATP is bound at residue 120–126 (GSNGKTT).

It belongs to the MurCDEF family.

The protein resides in the cytoplasm. The enzyme catalyses UDP-N-acetyl-alpha-D-muramoyl-L-alanine + D-glutamate + ATP = UDP-N-acetyl-alpha-D-muramoyl-L-alanyl-D-glutamate + ADP + phosphate + H(+). It participates in cell wall biogenesis; peptidoglycan biosynthesis. Functionally, cell wall formation. Catalyzes the addition of glutamate to the nucleotide precursor UDP-N-acetylmuramoyl-L-alanine (UMA). The protein is UDP-N-acetylmuramoylalanine--D-glutamate ligase of Pediococcus pentosaceus (strain ATCC 25745 / CCUG 21536 / LMG 10740 / 183-1w).